A 409-amino-acid polypeptide reads, in one-letter code: Peptide chain release factor subunit 1 (409 aa).

The protein belongs to the eukaryotic release factor 1 family. In terms of assembly, heterodimer of two subunits, one of which binds GTP.

The protein localises to the cytoplasm. Its function is as follows. Directs the termination of nascent peptide synthesis (translation) in response to the termination codons UAA, UAG and UGA. The protein is Peptide chain release factor subunit 1 of Methanopyrus kandleri (strain AV19 / DSM 6324 / JCM 9639 / NBRC 100938).